We begin with the raw amino-acid sequence, 457 residues long: Equilibrative nucleoside transporter 1 (457 aa).

Topologically, residues 1–12 are cytoplasmic; sequence MTTSHQPQDRYK. The helical transmembrane segment at 13–29 threads the bilayer; the sequence is AVWLIFFVLGLGTLLPW. At 30 to 82 the chain is on the extracellular side; sequence NFFITATQYFTSRLNTSQNISLVTNQSCESTEALADPSVSLPARSSLSAIFNN. N-linked (GlcNAc...) asparagine glycans are attached at residues Asn44, Asn48, and Asn54. A helical membrane pass occupies residues 83 to 107; sequence VMTLCAMLPLLIFTCLNSFLHQKVS. The Cytoplasmic portion of the chain corresponds to 108 to 111; that stretch reads QSLR. A helical membrane pass occupies residues 112 to 130; that stretch reads ILGSLLAILLVFLVTATLV. Residues 131–138 lie on the Extracellular side of the membrane; that stretch reads KVQMDALS. A helical transmembrane segment spans residues 139–157; the sequence is FFIITMIKIVLINSFGAIL. The Cytoplasmic portion of the chain corresponds to 158–174; it reads QASLFGLAGVLPANYTA. A helical transmembrane segment spans residues 175–199; that stretch reads PIMSGQGLAGFFTSVAMICAVASGS. Over 200–206 the chain is Extracellular; sequence KLSESAF. The helical transmembrane segment at 207–227 threads the bilayer; sequence GYFITACAVVILAILCYLALP. Topologically, residues 228 to 291 are cytoplasmic; the sequence is WMEFYRHYLQ…IKAILKSIWV (64 aa). Phosphoserine is present on Ser254. The span at 255–266 shows a compositional bias: basic and acidic residues; it reads EGEEPRGGREES. The segment at 255–275 is disordered; it reads EGEEPRGGREESGVPGPNSLP. Ser273 is modified (phosphoserine). A helical membrane pass occupies residues 292–311; that stretch reads LALSVCFIFTVTIGLFPAVT. The Extracellular portion of the chain corresponds to 312–323; it reads AEVESSIAGTSP. Residues 324–343 traverse the membrane as a helical segment; that stretch reads WKNCYFIPVACFLNFNVFDW. Residues 344-360 lie on the Cytoplasmic side of the membrane; sequence LGRSLTAICMWPGQDSR. Residues 361 to 379 traverse the membrane as a helical segment; that stretch reads WLPVLVACRVVFIPLLMLC. Residues 380–394 are Extracellular-facing; that stretch reads NVKQHHYLPSLFKHD. A helical transmembrane segment spans residues 395-414; the sequence is VWFITFMAAFAFSNGYLASL. Over 415 to 432 the chain is Cytoplasmic; it reads CMCFGPKKVKPAEAETAG. Residues 433-453 traverse the membrane as a helical segment; the sequence is NIMSFFLCLGLALGAVLSFLL. Over 454–457 the chain is Extracellular; that stretch reads RALV.

It belongs to the SLC29A/ENT transporter (TC 2.A.57) family. In terms of assembly, identified in a complex with STOM. In terms of tissue distribution, expressed in jejunum, liver and lung. Expressed in testis at the blood-testis barrier (at protein level). Expressed in ventricular myocytes (at protein level). Expressed in kidney.

The protein localises to the basolateral cell membrane. Its subcellular location is the apical cell membrane. It localises to the cell membrane. It carries out the reaction adenosine(in) = adenosine(out). The enzyme catalyses guanosine(in) = guanosine(out). The catalysed reaction is inosine(in) = inosine(out). It catalyses the reaction uridine(out) = uridine(in). It carries out the reaction thymidine(in) = thymidine(out). The enzyme catalyses cytidine(in) = cytidine(out). The catalysed reaction is adenine(out) = adenine(in). It catalyses the reaction guanine(out) = guanine(in). It carries out the reaction thymine(out) = thymine(in). The enzyme catalyses uracil(in) = uracil(out). The catalysed reaction is hypoxanthine(out) = hypoxanthine(in). Its activity is regulated as follows. Transport activity is sensitive to low concentrations of the inhibitor nitrobenzylmercaptopurine riboside (NBMPR). Uniporter involved in the facilitative transport of nucleosides and nucleobases, and contributes to maintaining their cellular homeostasis. Functions as a Na(+)-independent transporter. Involved in the transport of nucleosides such as adenosine, thymidine and uridine. Also transports purine nucleobases (hypoxanthine, adenine, guanine) and pyrimidine nucleobases (thymine, uracil). Mediates basolateral nucleoside uptake into Sertoli cells, thereby regulating the transport of nucleosides in testis across the blood-testis barrier. Regulates inosine levels in brown adipocytes tissues (BAT) and extracellular inosine levels, which controls BAT-dependent energy expenditure. The protein is Equilibrative nucleoside transporter 1 of Rattus norvegicus (Rat).